Reading from the N-terminus, the 334-residue chain is Phosphate acyltransferase (334 aa).

Belongs to the PlsX family. In terms of assembly, homodimer. Probably interacts with PlsY.

The protein resides in the cytoplasm. The catalysed reaction is a fatty acyl-[ACP] + phosphate = an acyl phosphate + holo-[ACP]. Its pathway is lipid metabolism; phospholipid metabolism. In terms of biological role, catalyzes the reversible formation of acyl-phosphate (acyl-PO(4)) from acyl-[acyl-carrier-protein] (acyl-ACP). This enzyme utilizes acyl-ACP as fatty acyl donor, but not acyl-CoA. This is Phosphate acyltransferase from Acholeplasma laidlawii (strain PG-8A).